Reading from the N-terminus, the 198-residue chain is Glycerol-3-phosphate acyltransferase 2 (198 aa).

Transmembrane regions (helical) follow at residues 4–24 (TYLL…LVVG), 71–91 (LPMV…AVLG), 113–133 (LLCY…TLLF), and 147–167 (VVAV…AMCL).

This sequence belongs to the PlsY family. In terms of assembly, probably interacts with PlsX.

The protein localises to the cell membrane. The catalysed reaction is an acyl phosphate + sn-glycerol 3-phosphate = a 1-acyl-sn-glycero-3-phosphate + phosphate. Its pathway is lipid metabolism; phospholipid metabolism. Functionally, catalyzes the transfer of an acyl group from acyl-phosphate (acyl-PO(4)) to glycerol-3-phosphate (G3P) to form lysophosphatidic acid (LPA). This enzyme utilizes acyl-phosphate as fatty acyl donor, but not acyl-CoA or acyl-ACP. The polypeptide is Glycerol-3-phosphate acyltransferase 2 (Bacillus cereus (strain ZK / E33L)).